Reading from the N-terminus, the 181-residue chain is Oligoribonuclease (181 aa).

In terms of domain architecture, Exonuclease spans 8-171 (LIWIDLEMTG…QDIQESIAEL (164 aa)). Residue Tyr129 is part of the active site.

This sequence belongs to the oligoribonuclease family.

It localises to the cytoplasm. Its function is as follows. 3'-to-5' exoribonuclease specific for small oligoribonucleotides. The polypeptide is Oligoribonuclease (Shewanella sp. (strain MR-4)).